Consider the following 248-residue polypeptide: Aspartate/glutamate leucyltransferase (248 aa).

The protein belongs to the R-transferase family. Bpt subfamily.

Its subcellular location is the cytoplasm. The enzyme catalyses N-terminal L-glutamyl-[protein] + L-leucyl-tRNA(Leu) = N-terminal L-leucyl-L-glutamyl-[protein] + tRNA(Leu) + H(+). It catalyses the reaction N-terminal L-aspartyl-[protein] + L-leucyl-tRNA(Leu) = N-terminal L-leucyl-L-aspartyl-[protein] + tRNA(Leu) + H(+). Functionally, functions in the N-end rule pathway of protein degradation where it conjugates Leu from its aminoacyl-tRNA to the N-termini of proteins containing an N-terminal aspartate or glutamate. The chain is Aspartate/glutamate leucyltransferase from Methylobacterium sp. (strain 4-46).